We begin with the raw amino-acid sequence, 226 residues long: 2-C-methyl-D-erythritol 4-phosphate cytidylyltransferase (226 aa).

It belongs to the IspD/TarI cytidylyltransferase family. IspD subfamily.

The enzyme catalyses 2-C-methyl-D-erythritol 4-phosphate + CTP + H(+) = 4-CDP-2-C-methyl-D-erythritol + diphosphate. It functions in the pathway isoprenoid biosynthesis; isopentenyl diphosphate biosynthesis via DXP pathway; isopentenyl diphosphate from 1-deoxy-D-xylulose 5-phosphate: step 2/6. Functionally, catalyzes the formation of 4-diphosphocytidyl-2-C-methyl-D-erythritol from CTP and 2-C-methyl-D-erythritol 4-phosphate (MEP). The protein is 2-C-methyl-D-erythritol 4-phosphate cytidylyltransferase of Actinobacillus pleuropneumoniae serotype 7 (strain AP76).